The primary structure comprises 292 residues: Protein-L-isoaspartate O-methyltransferase (292 aa).

The disordered stretch occupies residues methionine 1–alanine 76. Over residues asparagine 28 to glutamine 48 the composition is skewed to polar residues. Serine 138 is a catalytic residue.

The protein belongs to the methyltransferase superfamily. L-isoaspartyl/D-aspartyl protein methyltransferase family.

The protein resides in the cytoplasm. It carries out the reaction [protein]-L-isoaspartate + S-adenosyl-L-methionine = [protein]-L-isoaspartate alpha-methyl ester + S-adenosyl-L-homocysteine. Catalyzes the methyl esterification of L-isoaspartyl residues in peptides and proteins that result from spontaneous decomposition of normal L-aspartyl and L-asparaginyl residues. It plays a role in the repair and/or degradation of damaged proteins. This chain is Protein-L-isoaspartate O-methyltransferase, found in Janthinobacterium sp. (strain Marseille) (Minibacterium massiliensis).